Reading from the N-terminus, the 793-residue chain is Meiosis-specific protein ASY3 (793 aa).

Disordered regions lie at residues 1 to 40, 58 to 97, 110 to 287, and 305 to 586; these read MSDYRSFGSNYHPSSQSRKISIGVMADSQPKRNLVPDKDD, LQANKKEKSDLAAKQRNSAQVTGHVTSPWRSPRSSHRKLG, LSGS…KAGA, and EGLR…KRNS. Positions 7–19 are enriched in polar residues; sequence FGSNYHPSSQSRK. Positions 60–70 are enriched in basic and acidic residues; that stretch reads ANKKEKSDLAA. The span at 72-86 shows a compositional bias: polar residues; the sequence is QRNSAQVTGHVTSPW. Residues 110–122 are compositionally biased toward low complexity; that stretch reads LSGSKGLNKGLNG. The span at 131–142 shows a compositional bias: polar residues; the sequence is SFQNCPISSPQH. Composition is skewed to basic and acidic residues over residues 151 to 165 and 177 to 187; these read RNDRVMDRSPERMEE and SQREKMDKPGK. Positions 209–219 are enriched in polar residues; the sequence is PANNEDVNSET. Positions 221-248 are enriched in basic and acidic residues; that stretch reads EVEKTNFKLSQDKGSNDDPLIKPRHNSD. The segment covering 322-341 has biased composition (basic residues); sequence KKQRGRRKNTVVKCRKAHSR. Basic and acidic residues-rich tracts occupy residues 342–354, 363–385, 392–407, and 424–441; these read KKDEADWSRKEAS, ESTETGKRSSSSDKKGSSHDLHP, QKPDISTREGDFHPSP, and NGDKHERPSNIFREKSVE. 2 stretches are compositionally biased toward low complexity: residues 455–470 and 491–502; these read APISSPSPCCSPEASP and GTKKTSQGTTGQ. Composition is skewed to basic and acidic residues over residues 505 to 527 and 541 to 553; these read DTEKRLPDFLEKKRDYSFRRESS and SDERDSDGSREDS. The stretch at 682–745 forms a coiled coil; sequence SNLAKTKRKH…KGSIKKQRTS (64 aa).

As to quaternary structure, interacts with ASY1.

The protein localises to the chromosome. It localises to the nucleus. Its function is as follows. Required for normal meiosis in male and female gametophytes. Acts with ASY1 at the interface between the developing chromosome axes and the recombination machinery to ensure interhomolog recombination. Required for synaptonemal complex formation during meiosis. The sequence is that of Meiosis-specific protein ASY3 from Arabidopsis thaliana (Mouse-ear cress).